The chain runs to 780 residues: Replication origin-binding protein (780 aa).

Positions 39–195 (SFENVRQPIK…AAFKPDTQIA (157 aa)) constitute a Helicase ATP-binding domain. 52 to 59 (AAMGSGKT) is an ATP binding site.

This sequence belongs to the herpesviridae OriBP family.

Probably involved in DNA replication. Binds the origin of replication (ori). This is Replication origin-binding protein (U73) from Human herpesvirus 6A (strain Uganda-1102) (HHV-6 variant A).